We begin with the raw amino-acid sequence, 377 residues long: Glutamate 5-kinase (377 aa).

Lysine 20 is a binding site for ATP. Serine 60, aspartate 147, and asparagine 159 together coordinate substrate. ATP is bound at residue 179 to 180 (SD). In terms of domain architecture, PUA spans 281–355 (HGQLHLDAGA…GQSTSDLPEF (75 aa)).

Belongs to the glutamate 5-kinase family.

Its subcellular location is the cytoplasm. It carries out the reaction L-glutamate + ATP = L-glutamyl 5-phosphate + ADP. It participates in amino-acid biosynthesis; L-proline biosynthesis; L-glutamate 5-semialdehyde from L-glutamate: step 1/2. Functionally, catalyzes the transfer of a phosphate group to glutamate to form L-glutamate 5-phosphate. The polypeptide is Glutamate 5-kinase (Corynebacterium jeikeium (strain K411)).